The primary structure comprises 30 residues: MKYDSLADLVVQAEKQNVPLXXLIXKDQAE.

It belongs to the iron-sulfur dependent L-serine dehydratase family. Heterodimer of an alpha chain and a beta chain. [4Fe-4S] cluster is required as a cofactor.

It carries out the reaction L-serine = pyruvate + NH4(+). The protein operates within carbohydrate biosynthesis; gluconeogenesis. This chain is L-serine dehydratase, alpha chain, found in Anaerotignum propionicum (Clostridium propionicum).